A 132-amino-acid polypeptide reads, in one-letter code: Small ribosomal subunit protein uS17c (132 aa).

Over residues 1-11 (MLLLSSPFVSV) the composition is skewed to low complexity. Disordered regions lie at residues 1 to 23 (MLLL…SHGA) and 104 to 132 (PLPP…SSRE). Residues 1–31 (MLLLSSPFVSVSPPPPPLSSHGARPALRIEA) constitute a chloroplast transit peptide. Acidic residues predominate over residues 122–132 (SDDDQEPSSRE).

This sequence belongs to the universal ribosomal protein uS17 family. In terms of assembly, part of the 30S ribosomal subunit.

Its subcellular location is the plastid. It is found in the chloroplast. In terms of biological role, one of the primary rRNA binding proteins, it binds specifically to the 5'-end of 16S ribosomal RNA. Its function is as follows. In the hcf60 mutation the Activator tag is inserted 17 base pars upstream of the initiation codon. This mutation is seedling lethal, due to plastid ribosome insufficiency. However under non-light stressed conditions photosynthesis and oxygen evolution can occur. This Zea mays (Maize) protein is Small ribosomal subunit protein uS17c (RPS17).